Consider the following 247-residue polypeptide: Eukaryotic translation initiation factor 6-1 (247 aa).

The protein belongs to the eIF-6 family. As to quaternary structure, monomer. Associates with the 60S ribosomal subunit.

Its subcellular location is the cytoplasm. It localises to the nucleus. The protein resides in the nucleolus. In terms of biological role, binds to the 60S ribosomal subunit and prevents its association with the 40S ribosomal subunit to form the 80S initiation complex in the cytoplasm. May also be involved in ribosome biogenesis. In Arabidopsis thaliana (Mouse-ear cress), this protein is Eukaryotic translation initiation factor 6-1.